The sequence spans 168 residues: DNA-binding protein inhibitor ID-1 (168 aa).

Residues 46-98 enclose the bHLH domain; sequence LPALLDEQQVNVLLYDMNGCYSRLKELVPTLPQNRKVSKVEILQHVIDYIRDL. Residues 53 to 106 form an interaction with IFI204 region; it reads QQVNVLLYDMNGCYSRLKELVPTLPQNRKVSKVEILQHVIDYIRDLQLELNSES. Positions 91–104 match the Nuclear export signal motif; it reads VIDYIRDLQLELNS.

Heterodimer with other HLH proteins. Interacts with CLOCK and BMAL1. Interacts with COPS5, IFI204, GATA4 and NKX2-5. In terms of processing, polyubiquitinated; which is favored by Ifi204 and leads to proteasomal degradation.

The protein resides in the cytoplasm. The protein localises to the nucleus. In terms of biological role, transcriptional regulator (lacking a basic DNA binding domain) which negatively regulates the basic helix-loop-helix (bHLH) transcription factors by forming heterodimers and inhibiting their DNA binding and transcriptional activity. Implicated in regulating a variety of cellular processes, including cellular growth, senescence, differentiation, apoptosis, angiogenesis, and neoplastic transformation. Inhibits skeletal muscle and cardiac myocyte differentiation. Regulates the circadian clock by repressing the transcriptional activator activity of the CLOCK-BMAL1 heterodimer. This chain is DNA-binding protein inhibitor ID-1 (Id1), found in Mus musculus (Mouse).